We begin with the raw amino-acid sequence, 100 residues long: Co-chaperonin GroES (100 aa).

Belongs to the GroES chaperonin family. Heptamer of 7 subunits arranged in a ring. Interacts with the chaperonin GroEL.

Its subcellular location is the cytoplasm. Together with the chaperonin GroEL, plays an essential role in assisting protein folding. The GroEL-GroES system forms a nano-cage that allows encapsulation of the non-native substrate proteins and provides a physical environment optimized to promote and accelerate protein folding. GroES binds to the apical surface of the GroEL ring, thereby capping the opening of the GroEL channel. The sequence is that of Co-chaperonin GroES from Rhodothermus marinus (Rhodothermus obamensis).